We begin with the raw amino-acid sequence, 925 residues long: Coronin-7 (925 aa).

4 WD repeats span residues 75-115 (CHSD…QALP), 124-163 (PEDL…PLTE), 166-205 (AHGD…RASQ), and 209-253 (AHEN…SALA). The segment at 419-461 (VGDADASEGFSSPPSSLTSPSTPSSLGPSLSSTSGIGTSPSLR) is disordered. Positions 429–460 (SSPPSSLTSPSTPSSLGPSLSSTSGIGTSPSL) are enriched in low complexity. Phosphoserine is present on residues S462 and S465. K472 participates in a covalent cross-link: Glycyl lysine isopeptide (Lys-Gly) (interchain with G-Cter in ubiquitin). WD repeat units follow at residues 542 to 582 (QNGA…LEEV), 592 to 632 (GHTE…DRLK), and 635 to 674 (GHQD…EPLQ). Residue K680 forms a Glycyl lysine isopeptide (Lys-Gly) (interchain with G-Cter in ubiquitin) linkage. One copy of the WD 8 repeat lies at 728 to 768 (DVAPSTLLPSYDPDTGLVLLTGKGDTRVFLYELLPESPFFL). The disordered stretch occupies residues 858–925 (QPPDMSPVSQ…FEGVDEDEWD (68 aa)). Low complexity predominate over residues 866-882 (SQAPREAPARRAPSSAQ). Basic and acidic residues predominate over residues 884 to 896 (LEEKSDQQKKEEL). The residue at position 915 (S915) is a Phosphoserine.

It belongs to the WD repeat coronin family. As to quaternary structure, interacts with clathrin adapter AP1 complex. This interaction takes place at Golgi membranes and not AP1-positive endosomal membranes. Interacts (when ubiquitinated at Lys-472) with EPS15. In terms of processing, the membrane-associated form is phosphorylated on tyrosine residues. Post-translationally, ubiquitinated via 'Lys-33'-linked ubiquitin chains by the BCR(KLHL20) E3 ubiquitin ligase complex: 'Lys-33'-linked ubiquitination promotes interaction with EPS15 and facilitates actin polymerization at the trans-Golgi network, thereby facilitating post-Golgi trafficking. Deubiquitinated by ZRANB1/TRABID. As to expression, widely expressed. Expressed in the spleen, peripheral leukocytes, testes, brain, thymus and small intestine.

The protein resides in the golgi apparatus membrane. Its subcellular location is the golgi apparatus. It localises to the trans-Golgi network. It is found in the cytoplasmic vesicle. The protein localises to the cytoplasm. The protein resides in the cytosol. Functionally, F-actin regulator involved in anterograde Golgi to endosome transport: upon ubiquitination via 'Lys-33'-linked ubiquitin chains by the BCR(KLHL20) E3 ubiquitin ligase complex, interacts with EPS15 and localizes to the trans-Golgi network, where it promotes actin polymerization, thereby facilitating post-Golgi trafficking. May play a role in the maintenance of the Golgi apparatus morphology. This Homo sapiens (Human) protein is Coronin-7 (CORO7).